The primary structure comprises 383 residues: 1-deoxy-D-xylulose 5-phosphate reductoisomerase (383 aa).

NADPH-binding residues include threonine 10, glycine 11, serine 12, isoleucine 13, asparagine 38, and asparagine 121. Residue lysine 122 participates in 1-deoxy-D-xylulose 5-phosphate binding. Glutamate 123 is a binding site for NADPH. Aspartate 147 contacts Mn(2+). 4 residues coordinate 1-deoxy-D-xylulose 5-phosphate: serine 148, glutamate 149, serine 172, and histidine 195. Glutamate 149 contacts Mn(2+). Glycine 201 provides a ligand contact to NADPH. Serine 208, asparagine 213, lysine 214, and glutamate 217 together coordinate 1-deoxy-D-xylulose 5-phosphate. A Mn(2+)-binding site is contributed by glutamate 217.

The protein belongs to the DXR family. The cofactor is Mg(2+). Requires Mn(2+) as cofactor.

The enzyme catalyses 2-C-methyl-D-erythritol 4-phosphate + NADP(+) = 1-deoxy-D-xylulose 5-phosphate + NADPH + H(+). The protein operates within isoprenoid biosynthesis; isopentenyl diphosphate biosynthesis via DXP pathway; isopentenyl diphosphate from 1-deoxy-D-xylulose 5-phosphate: step 1/6. Catalyzes the NADPH-dependent rearrangement and reduction of 1-deoxy-D-xylulose-5-phosphate (DXP) to 2-C-methyl-D-erythritol 4-phosphate (MEP). This is 1-deoxy-D-xylulose 5-phosphate reductoisomerase from Ruthia magnifica subsp. Calyptogena magnifica.